Consider the following 121-residue polypeptide: Type II secretion system protein I (121 aa).

Residues 1 to 6 (MKKQSG) constitute a propeptide, leader sequence. M7 carries the post-translational modification N-methylmethionine. Residues 7–27 (MTLIEVMVALVVFALAGLAVM) traverse the membrane as a helical segment.

It belongs to the GSP I family. Type II secretion is composed of four main components: the outer membrane complex, the inner membrane complex, the cytoplasmic secretion ATPase and the periplasm-spanning pseudopilus. Interacts with core component PulG. Cleaved by prepilin peptidase. Post-translationally, methylated by prepilin peptidase at the amino group of the N-terminal methionine once the leader sequence is cleaved by prepilin peptidase.

The protein resides in the cell inner membrane. Its function is as follows. Component of the type II secretion system required for the energy-dependent secretion of extracellular factors such as proteases and toxins from the periplasm. Part of the pseudopilus tip complex that is critical for the recognition and binding of secretion substrates. The polypeptide is Type II secretion system protein I (pulI) (Klebsiella pneumoniae).